The chain runs to 141 residues: ATP synthase epsilon chain (141 aa).

Belongs to the ATPase epsilon chain family. In terms of assembly, F-type ATPases have 2 components, CF(1) - the catalytic core - and CF(0) - the membrane proton channel. CF(1) has five subunits: alpha(3), beta(3), gamma(1), delta(1), epsilon(1). CF(0) has three main subunits: a, b and c.

It localises to the cell inner membrane. Its function is as follows. Produces ATP from ADP in the presence of a proton gradient across the membrane. In Pseudomonas fluorescens (strain ATCC BAA-477 / NRRL B-23932 / Pf-5), this protein is ATP synthase epsilon chain.